The primary structure comprises 340 residues: HTH-type transcriptional repressor PurR (340 aa).

Residues 2-56 (ATIKDVAKLVGVSTTTVSHVINKTRFVAEDTTKAVWEAIASLNYSPSAVARSLKV) form the HTH lacI-type domain. Residues 4 to 23 (IKDVAKLVGVSTTTVSHVIN) constitute a DNA-binding region (H-T-H motif). Residues 48–56 (SAVARSLKV) mediate DNA binding. Positions 73, 188, 190, 219, and 273 each coordinate hypoxanthine.

In terms of assembly, homodimer.

The protein operates within purine metabolism; purine nucleotide biosynthesis [regulation]. In terms of biological role, is the main repressor of the genes involved in the de novo synthesis of purine nucleotides, regulating purB, purC, purEK, purF, purHD, purL, purMN and guaBA expression. PurR is allosterically activated to bind its cognate DNA by binding the purine corepressors, hypoxanthine or guanine, thereby effecting transcription repression. In Glaesserella parasuis serovar 5 (strain SH0165) (Haemophilus parasuis), this protein is HTH-type transcriptional repressor PurR.